Here is a 158-residue protein sequence, read N- to C-terminus: NAD(P)H-quinone oxidoreductase subunit J, chloroplastic (158 aa).

Belongs to the complex I 30 kDa subunit family. In terms of assembly, NDH is composed of at least 16 different subunits, 5 of which are encoded in the nucleus.

It localises to the plastid. The protein localises to the chloroplast thylakoid membrane. It carries out the reaction a plastoquinone + NADH + (n+1) H(+)(in) = a plastoquinol + NAD(+) + n H(+)(out). The enzyme catalyses a plastoquinone + NADPH + (n+1) H(+)(in) = a plastoquinol + NADP(+) + n H(+)(out). In terms of biological role, NDH shuttles electrons from NAD(P)H:plastoquinone, via FMN and iron-sulfur (Fe-S) centers, to quinones in the photosynthetic chain and possibly in a chloroplast respiratory chain. The immediate electron acceptor for the enzyme in this species is believed to be plastoquinone. Couples the redox reaction to proton translocation, and thus conserves the redox energy in a proton gradient. The polypeptide is NAD(P)H-quinone oxidoreductase subunit J, chloroplastic (Lupinus luteus (European yellow lupine)).